Consider the following 556-residue polypeptide: Phenylalanine--tRNA ligase beta subunit (556 aa).

The 77-residue stretch at 278-354 (LTPKEFEVSF…IAYGYNNIDP (77 aa)) folds into the B5 domain. Positions 332, 338, 341, and 342 each coordinate Mg(2+).

Belongs to the phenylalanyl-tRNA synthetase beta subunit family. Type 2 subfamily. In terms of assembly, tetramer of two alpha and two beta subunits. Mg(2+) serves as cofactor.

It localises to the cytoplasm. It carries out the reaction tRNA(Phe) + L-phenylalanine + ATP = L-phenylalanyl-tRNA(Phe) + AMP + diphosphate + H(+). The polypeptide is Phenylalanine--tRNA ligase beta subunit (Pyrococcus furiosus (strain ATCC 43587 / DSM 3638 / JCM 8422 / Vc1)).